A 389-amino-acid polypeptide reads, in one-letter code: Putative phosphoserine aminotransferase (389 aa).

Residue Arg-45 coordinates L-glutamate. Pyridoxal 5'-phosphate contacts are provided by residues 79–80 (GT), Trp-114, Thr-169, Asp-191, and Gln-214. Lys-215 is subject to N6-(pyridoxal phosphate)lysine. 265 to 266 (NT) serves as a coordination point for pyridoxal 5'-phosphate.

Belongs to the class-V pyridoxal-phosphate-dependent aminotransferase family. SerC subfamily. In terms of assembly, homodimer. The cofactor is pyridoxal 5'-phosphate.

It carries out the reaction O-phospho-L-serine + 2-oxoglutarate = 3-phosphooxypyruvate + L-glutamate. The catalysed reaction is 4-(phosphooxy)-L-threonine + 2-oxoglutarate = (R)-3-hydroxy-2-oxo-4-phosphooxybutanoate + L-glutamate. Its pathway is amino-acid biosynthesis; L-serine biosynthesis; L-serine from 3-phospho-D-glycerate: step 2/3. It participates in cofactor biosynthesis; pyridoxine 5'-phosphate biosynthesis; pyridoxine 5'-phosphate from D-erythrose 4-phosphate: step 3/5. Its function is as follows. Catalyzes the reversible conversion of 3-phosphohydroxypyruvate to phosphoserine and of 3-hydroxy-2-oxo-4-phosphonooxybutanoate to phosphohydroxythreonine. This Schizosaccharomyces pombe (strain 972 / ATCC 24843) (Fission yeast) protein is Putative phosphoserine aminotransferase.